We begin with the raw amino-acid sequence, 55 residues long: Spermatid nuclear transition protein 1 (55 aa).

Basic residues predominate over residues Met-1–Lys-42. Positions Met-1–Leu-55 are disordered. Phosphoserine occurs at positions 9, 36, 37, and 40.

The protein belongs to the nuclear transition protein 1 family. In terms of tissue distribution, testis.

It localises to the nucleus. The protein localises to the chromosome. Its function is as follows. Plays a key role in the replacement of histones to protamine in the elongating spermatids of mammals. In condensing spermatids, loaded onto the nucleosomes, where it promotes the recruitment and processing of protamines, which are responsible for histone eviction. The chain is Spermatid nuclear transition protein 1 (TNP1) from Bos taurus (Bovine).